Consider the following 198-residue polypeptide: Transcriptional regulator GfcR (198 aa).

The protein belongs to the purine/pyrimidine phosphoribosyltransferase family. GfcR subfamily.

The sequence is that of Transcriptional regulator GfcR from Methanosphaera stadtmanae (strain ATCC 43021 / DSM 3091 / JCM 11832 / MCB-3).